We begin with the raw amino-acid sequence, 469 residues long: DNA-binding transcriptional regulator NtrC (469 aa).

The Response regulatory domain occupies 5 to 119 (IVWVVDDDSS…EAVALVERAI (115 aa)). Residue Asp-54 is modified to 4-aspartylphosphate. The region spanning 140–369 (MIGEAPAMQD…LENTCRWLTV (230 aa)) is the Sigma-54 factor interaction domain. ATP is bound by residues 168 to 175 (GESGTGKE) and 231 to 240 (ADGGTLFLDE). A DNA-binding region (H-T-H motif) is located at residues 445–464 (KQEAARLLGWGRNTLTRKLK).

Phosphorylated and dephosphorylated by NtrB.

The protein resides in the cytoplasm. In terms of biological role, member of the two-component regulatory system NtrB/NtrC, which controls expression of the nitrogen-regulated (ntr) genes in response to nitrogen limitation. Phosphorylated NtrC binds directly to DNA and stimulates the formation of open promoter-sigma54-RNA polymerase complexes. The protein is DNA-binding transcriptional regulator NtrC (glnG) of Salmonella typhimurium (strain LT2 / SGSC1412 / ATCC 700720).